A 506-amino-acid polypeptide reads, in one-letter code: Maturase K (506 aa).

Belongs to the intron maturase 2 family. MatK subfamily.

Its subcellular location is the plastid. It localises to the chloroplast. Usually encoded in the trnK tRNA gene intron. Probably assists in splicing its own and other chloroplast group II introns. In Hydrangea macrophylla (Bigleaf hydrangea), this protein is Maturase K.